The primary structure comprises 405 residues: Pyruvate decarboxylase 2 (405 aa).

The interval D232 to I314 is thiamine pyrophosphate binding. Positions 282, 309, and 311 each coordinate Mg(2+). E315 contributes to the substrate binding site.

Belongs to the TPP enzyme family. In terms of assembly, homotetramer. The cofactor is a metal cation. It depends on thiamine diphosphate as a cofactor.

It catalyses the reaction a 2-oxocarboxylate + H(+) = an aldehyde + CO2. The sequence is that of Pyruvate decarboxylase 2 (PDC2) from Pisum sativum (Garden pea).